Here is a 365-residue protein sequence, read N- to C-terminus: Patr class I histocompatibility antigen, A-126 alpha chain (365 aa).

Residues 1-24 (MAVMAPRTLVLLLSGALALTQTWA) form the signal peptide. An alpha-1 region spans residues 25–114 (GSHSMRYFST…LRGYYNQSED (90 aa)). Over 25 to 308 (GSHSMRYFST…EPSSQPTIPI (284 aa)) the chain is Extracellular. N110 carries N-linked (GlcNAc...) asparagine glycosylation. Residues 115–206 (GSHTIQLMFG…ENGKETLQRT (92 aa)) are alpha-2. 2 disulfides stabilise this stretch: C125–C188 and C227–C283. Positions 207 to 298 (DPPKTHMTHH…GLPKPLTLRW (92 aa)) are alpha-3. The region spanning 209–295 (PKTHMTHHPI…QHEGLPKPLT (87 aa)) is the Ig-like C1-type domain. Residues 299 to 308 (EPSSQPTIPI) are connecting peptide. The chain crosses the membrane as a helical span at residues 309-332 (VGIIAGLVLLGAVITGAVVAAVMW). The Cytoplasmic segment spans residues 333–365 (RRKSSDRKGGSYSQAASSDSAQGSDVSLTACKV). The disordered stretch occupies residues 338–365 (DRKGGSYSQAASSDSAQGSDVSLTACKV). Residues 342 to 359 (GSYSQAASSDSAQGSDVS) show a composition bias toward low complexity. Phosphoserine is present on S343. A Phosphotyrosine modification is found at Y344. Phosphoserine is present on residues S345, S349, S352, S356, and S359.

It belongs to the MHC class I family. As to quaternary structure, heterodimer of an alpha chain and a beta chain (beta-2-microglobulin).

Its subcellular location is the membrane. In terms of biological role, involved in the presentation of foreign antigens to the immune system. The protein is Patr class I histocompatibility antigen, A-126 alpha chain (Patr-A) of Pan troglodytes (Chimpanzee).